The chain runs to 156 residues: Transcription antitermination protein NusB (156 aa).

Belongs to the NusB family.

In terms of biological role, involved in transcription antitermination. Required for transcription of ribosomal RNA (rRNA) genes. Binds specifically to the boxA antiterminator sequence of the ribosomal RNA (rrn) operons. This is Transcription antitermination protein NusB from Rickettsia felis (strain ATCC VR-1525 / URRWXCal2) (Rickettsia azadi).